Consider the following 346-residue polypeptide: Upstream stimulatory factor 2 (346 aa).

2 disordered regions span residues 1–44 (MDML…PGAE) and 215–244 (APRTHPYSPKIDGTRTPRDERRRAQHNEVE). A compositionally biased stretch (low complexity) spans 11–20 (ASSATAAAAA). The segment covering 226–244 (DGTRTPRDERRRAQHNEVE) has biased composition (basic and acidic residues). Residues 235 to 290 (RRRAQHNEVERRRRDKINNWIVQLSKIIPDCHADNSKTGASKGGILSKACDYIREL) form the bHLH domain. Residues 307–328 (LQMDNELLRQQIEELKNENALL) are leucine-zipper.

As to quaternary structure, efficient DNA binding requires dimerization with another bHLH protein. Binds DNA as a homodimer or a heterodimer (USF1/USF2). Interacts with MAF.

It localises to the nucleus. Transcription factor that binds to a symmetrical DNA sequence (E-boxes) (5'-CACGTG-3') that is found in a variety of viral and cellular promoters. The protein is Upstream stimulatory factor 2 (Usf2) of Mus musculus (Mouse).